Reading from the N-terminus, the 274-residue chain is Diaminopimelate epimerase (274 aa).

Positions 11, 44, and 64 each coordinate substrate. Cysteine 73 acts as the Proton donor in catalysis. Substrate contacts are provided by residues 74–75, asparagine 157, asparagine 190, and 208–209; these read GN and ER. Residue cysteine 217 is the Proton acceptor of the active site. 218-219 is a substrate binding site; it reads GS.

The protein belongs to the diaminopimelate epimerase family. In terms of assembly, homodimer.

The protein resides in the cytoplasm. It catalyses the reaction (2S,6S)-2,6-diaminopimelate = meso-2,6-diaminopimelate. It functions in the pathway amino-acid biosynthesis; L-lysine biosynthesis via DAP pathway; DL-2,6-diaminopimelate from LL-2,6-diaminopimelate: step 1/1. Its function is as follows. Catalyzes the stereoinversion of LL-2,6-diaminopimelate (L,L-DAP) to meso-diaminopimelate (meso-DAP), a precursor of L-lysine and an essential component of the bacterial peptidoglycan. This chain is Diaminopimelate epimerase, found in Haemophilus ducreyi (strain 35000HP / ATCC 700724).